Consider the following 108-residue polypeptide: Mitochondrial import inner membrane translocase subunit tim-13 (108 aa).

Positions 45-68 (CTNKCITAPGSSLASGEKQCLQRC) match the Twin CX3C motif motif. 2 cysteine pairs are disulfide-bonded: Cys-45-Cys-68 and Cys-49-Cys-64. Positions 89–108 (EEMASSGGMGGGFGQGPSFS) are disordered. The span at 95 to 108 (GGMGGGFGQGPSFS) shows a compositional bias: gly residues.

Belongs to the small Tim family. Heterohexamer; composed of 3 copies of tim-8/ddp-1 and 3 copies of tin-13/tim-13, named soluble 70 kDa complex. Associates with the TIM22 complex, whose core is composed of tim-22.

The protein resides in the mitochondrion inner membrane. In terms of biological role, mitochondrial intermembrane chaperone that participates in the import and insertion of some multi-pass transmembrane proteins into the mitochondrial inner membrane. Also required for the transfer of beta-barrel precursors from the TOM complex to the sorting and assembly machinery (SAM complex) of the outer membrane. Acts as a chaperone-like protein that protects the hydrophobic precursors from aggregation and guide them through the mitochondrial intermembrane space. The tim-8-tim-13 complex mediates the import of some proteins while the predominant tim-9/tin-9.1-tim-10/tin-10 70 kDa complex mediates the import of much more proteins. The sequence is that of Mitochondrial import inner membrane translocase subunit tim-13 (tin-13) from Caenorhabditis elegans.